The primary structure comprises 59 residues: Cuticle protein 7 isoform c (59 aa).

Residue Gln1 is modified to Pyrrolidone carboxylic acid.

The protein is Cuticle protein 7 isoform c of Limulus polyphemus (Atlantic horseshoe crab).